The primary structure comprises 427 residues: Anaerobic glycerol-3-phosphate dehydrogenase subunit B (427 aa).

Belongs to the anaerobic G-3-P dehydrogenase subunit B family. In terms of assembly, composed of a catalytic GlpA/B dimer and of membrane bound GlpC. Requires FMN as cofactor.

The enzyme catalyses a quinone + sn-glycerol 3-phosphate = dihydroxyacetone phosphate + a quinol. Its pathway is polyol metabolism; glycerol degradation via glycerol kinase pathway; glycerone phosphate from sn-glycerol 3-phosphate (anaerobic route): step 1/1. Conversion of glycerol 3-phosphate to dihydroxyacetone. Uses fumarate or nitrate as electron acceptor. The chain is Anaerobic glycerol-3-phosphate dehydrogenase subunit B from Glaesserella parasuis serovar 5 (strain SH0165) (Haemophilus parasuis).